Reading from the N-terminus, the 379-residue chain is Lipid-A-disaccharide synthase (379 aa).

The protein belongs to the LpxB family.

It catalyses the reaction a lipid X + a UDP-2-N,3-O-bis[(3R)-3-hydroxyacyl]-alpha-D-glucosamine = a lipid A disaccharide + UDP + H(+). It functions in the pathway bacterial outer membrane biogenesis; LPS lipid A biosynthesis. Its function is as follows. Condensation of UDP-2,3-diacylglucosamine and 2,3-diacylglucosamine-1-phosphate to form lipid A disaccharide, a precursor of lipid A, a phosphorylated glycolipid that anchors the lipopolysaccharide to the outer membrane of the cell. This Aeromonas hydrophila subsp. hydrophila (strain ATCC 7966 / DSM 30187 / BCRC 13018 / CCUG 14551 / JCM 1027 / KCTC 2358 / NCIMB 9240 / NCTC 8049) protein is Lipid-A-disaccharide synthase.